Consider the following 197-residue polypeptide: Large ribosomal subunit protein bL9c (197 aa).

Residues 1–42 (MASSTALSLSWSSSPCWSHSFNGGANETLKVSERRFNFEVVS) constitute a chloroplast transit peptide.

This sequence belongs to the bacterial ribosomal protein bL9 family. As to quaternary structure, part of the 50S ribosomal subunit.

The protein localises to the plastid. Its subcellular location is the chloroplast. In terms of biological role, binds to the 23S rRNA. The protein is Large ribosomal subunit protein bL9c (RPL9) of Arabidopsis thaliana (Mouse-ear cress).